The chain runs to 2189 residues: Chromatin modification-related protein eaf-1 (2189 aa).

Disordered regions lie at residues 183–400, 415–438, and 477–601; these read VQGS…SGAE, VIGKAGVAGPHGAHSTGGLQTQHP, and EVAK…PPGL. Low complexity predominate over residues 234–253; the sequence is PTPQTVAPPATAPTSTTKTA. Positions 260–277 are enriched in basic and acidic residues; that stretch reads AGPKDDTVSRGDAEEKAR. Composition is skewed to polar residues over residues 281–293, 300–312, and 319–333; these read TITSVNQLLSNGD, TLSSPSSTVQSAP, and ASASTSPDNEASQSF. A compositionally biased stretch (basic and acidic residues) spans 336-349; it reads PVSRPEQELRRATT. The span at 534-543 shows a compositional bias: low complexity; the sequence is QPQPSSTAPS. Residues 573–583 are compositionally biased toward polar residues; the sequence is ETQARTSQSSH. The HSA domain occupies 722 to 797; it reads PVRCLEPARP…PPVRAVDNAD (76 aa). Positions 985–1045 constitute a Myb-like domain; it reads FESRIASQWT…ECFERWVNLE (61 aa). Low complexity-rich tracts occupy residues 1320-1330 and 1336-1406; these read VAVQLQQQQHQ and QHPQ…QVTQ. 4 disordered regions span residues 1320–1428, 1622–1644, 1663–1831, and 1846–2189; these read VAVQ…PMRP, MQTQTPAHQPHQPQAQPHVQAQA, QKQA…GQVQ, and VQGQ…APTK. Composition is skewed to low complexity over residues 1663-1808, 1818-1831, 1846-1863, 1873-2089, and 2097-2189; these read QKQA…QGQG, GQGHAQGQVQGQVQ, VQGQVQGQAPGQVQPQHA, QHAQ…QPQQ, and SQPQ…APTK.

Belongs to the EAF1 family. In terms of assembly, component of the NuA4 histone acetyltransferase complex.

The protein localises to the nucleus. In terms of biological role, component of the NuA4 histone acetyltransferase complex which is involved in transcriptional activation of selected genes principally by acetylation of nucleosomal histone H4 and H2A. The NuA4 complex is also involved in DNA repair. This chain is Chromatin modification-related protein eaf-1 (eaf-1), found in Neurospora crassa (strain ATCC 24698 / 74-OR23-1A / CBS 708.71 / DSM 1257 / FGSC 987).